We begin with the raw amino-acid sequence, 445 residues long: GRAM domain-containing protein 2B (445 aa).

Met1 is subject to N-acetylmethionine. Residues 1-118 (MVKKRLSSSD…ERKKSSSSSQ (118 aa)) are disordered. Polar residues-rich tracts occupy residues 18 to 44 (PSNS…SSEA) and 56 to 68 (KSPT…SSVE). Positions 82-93 (SKSSFDGSSLLS) are enriched in low complexity. Basic and acidic residues predominate over residues 94–112 (DKNDCKTESKTDSKTERKK). A GRAM domain is found at 123 to 190 (MHFHKLFLDV…FSVTLIKKTK (68 aa)). The span at 233–246 (TSVGNSPNPSSAEN) shows a compositional bias: polar residues. A disordered region spans residues 233–252 (TSVGNSPNPSSAENSFRADR). 3 positions are modified to phosphoserine: Ser238, Ser255, and Ser265. Residues 277-331 (DLEGYSSSGSQTPESENSRDFHVTESQTVLNVTKGETKPPRTDAHGSRAPDGKAK) form a disordered region. Polar residues predominate over residues 281–291 (YSSSGSQTPES). Residues 311-330 (GETKPPRTDAHGSRAPDGKA) are compositionally biased toward basic and acidic residues.

This Mus musculus (Mouse) protein is GRAM domain-containing protein 2B (Gramd2b).